Reading from the N-terminus, the 317-residue chain is Heme A synthase (317 aa).

At 1–6 (MQRSLK) the chain is on the cytoplasmic side. Residues 7 to 27 (WFASATTLAMLFVLIGGALVT) form a helical membrane-spanning segment. Over 28–62 (KTGSGMGCGRSWPLCNGQWVPDHITPELIIELSHR) the chain is Extracellular. Cys-35 and Cys-42 are oxidised to a cystine. Glu-58 is an active-site residue. Residue His-61 coordinates heme o. Residues 63–83 (LVSGLAGIMVLILSIWAWRAI) form a helical membrane-spanning segment. Topologically, residues 84 to 90 (GHVQETK) are cytoplasmic. Residues 91–111 (FLAVISFVFLVLQGLIGAAAV) traverse the membrane as a helical segment. Over 112–121 (VWGQSDFVLA) the chain is Extracellular. Residues 122-142 (LHFGISLISFAAVLLLTLLIF) traverse the membrane as a helical segment. Position 123 (His-123) interacts with heme o. The Cytoplasmic segment spans residues 143–159 (EIDKTFSAASLSLDGKM). Residues 160-180 (RFHIYGITIYSYIVVYTGALV) traverse the membrane as a helical segment. Residues 181–211 (RHTNASLACPSWPLCAKTRLLPVQFHEWVQM) are Extracellular-facing. Cys-189 and Cys-195 are oxidised to a cystine. A helical membrane pass occupies residues 212 to 232 (GHRLAAAVIIIWIAAAAIHAV). A heme b-binding site is contributed by His-213. Residues 233–243 (RHYRRQPVIYY) are Cytoplasmic-facing. Residues 244 to 264 (GWLIALLLVLAQMTTGALVVF) form a helical membrane-spanning segment. The Extracellular segment spans residues 265 to 270 (TQLNLY). Residues 271-291 (IALAHAFFISCLFGVLSYLLL) traverse the membrane as a helical segment. His-275 contacts heme b. At 292 to 317 (LALRTRRAPVKAADHSAGEAAPATLK) the chain is on the cytoplasmic side.

This sequence belongs to the COX15/CtaA family. Type 1 subfamily. In terms of assembly, interacts with CtaB. Heme b serves as cofactor.

The protein resides in the cell membrane. The catalysed reaction is Fe(II)-heme o + 2 A + H2O = Fe(II)-heme a + 2 AH2. It participates in porphyrin-containing compound metabolism; heme A biosynthesis; heme A from heme O: step 1/1. Functionally, catalyzes the conversion of heme O to heme A by two successive hydroxylations of the methyl group at C8. The first hydroxylation forms heme I, the second hydroxylation results in an unstable dihydroxymethyl group, which spontaneously dehydrates, resulting in the formyl group of heme A. This is Heme A synthase from Geobacillus kaustophilus (strain HTA426).